The primary structure comprises 283 residues: MGRRAPDRLDRGVTTTSPRTQAPPQAGRGVHATARIRATSHDGVTVLPLLRSDGPFHLRQLRNHGSQARVCVVSAMSAPLGGDRLAIDVSVEAGAQLEITTAAATLALRGATTDHATYDVTLTVGEQATLYWLPQPLISTRGSNLRQTYTVDLAPTARLILREELILGRAHEPPGDLSSHLTVHRDGRPLLAQHTTFGSTAPGWDGPAVLGEHRATGQILIVDPAFANAPPATRLLGDEPANGEGIVAPLAGPAVLATALAPTATPLRHLLDDAVRPRTPCST.

A compositionally biased stretch (basic and acidic residues) spans methionine 1–arginine 11. The segment at methionine 1–valine 30 is disordered. The span at valine 13–proline 23 shows a compositional bias: polar residues.

It belongs to the UreD family. In terms of assembly, ureD, UreF and UreG form a complex that acts as a GTP-hydrolysis-dependent molecular chaperone, activating the urease apoprotein by helping to assemble the nickel containing metallocenter of UreC. The UreE protein probably delivers the nickel.

It localises to the cytoplasm. Its function is as follows. Required for maturation of urease via the functional incorporation of the urease nickel metallocenter. This is Urease accessory protein UreD 2 from Saccharopolyspora erythraea (strain ATCC 11635 / DSM 40517 / JCM 4748 / NBRC 13426 / NCIMB 8594 / NRRL 2338).